A 333-amino-acid polypeptide reads, in one-letter code: Phosphate acyltransferase (333 aa).

This sequence belongs to the PlsX family. Homodimer. Probably interacts with PlsY.

It is found in the cytoplasm. The enzyme catalyses a fatty acyl-[ACP] + phosphate = an acyl phosphate + holo-[ACP]. Its pathway is lipid metabolism; phospholipid metabolism. Catalyzes the reversible formation of acyl-phosphate (acyl-PO(4)) from acyl-[acyl-carrier-protein] (acyl-ACP). This enzyme utilizes acyl-ACP as fatty acyl donor, but not acyl-CoA. This Thermoanaerobacterium thermosaccharolyticum (strain ATCC 7956 / DSM 571 / NCIMB 9385 / NCA 3814 / NCTC 13789 / WDCM 00135 / 2032) (Clostridium thermosaccharolyticum) protein is Phosphate acyltransferase.